A 246-amino-acid polypeptide reads, in one-letter code: Proteolipid protein DM gamma (246 aa).

A run of 4 helical transmembrane segments spans residues Leu19 to Cys35, Val71 to Leu87, Val118 to Phe134, and Phe206 to Ile222.

The protein belongs to the myelin proteolipid protein family. As to expression, highly expressed in white matter in myelinating shark brain.

The protein resides in the membrane. The chain is Proteolipid protein DM gamma from Squalus acanthias (Spiny dogfish).